The sequence spans 324 residues: tRNA uridine(34) hydroxylase (324 aa).

A Rhodanese domain is found at 122 to 218 (QENRCLILDV…YGQQVGTGKW (97 aa)). Cys-178 serves as the catalytic Cysteine persulfide intermediate.

This sequence belongs to the TrhO family.

It catalyses the reaction uridine(34) in tRNA + AH2 + O2 = 5-hydroxyuridine(34) in tRNA + A + H2O. Catalyzes oxygen-dependent 5-hydroxyuridine (ho5U) modification at position 34 in tRNAs. This Chlamydia pneumoniae (Chlamydophila pneumoniae) protein is tRNA uridine(34) hydroxylase.